Reading from the N-terminus, the 390-residue chain is MDATQLTELMGSHDFMQLQHQLHHNNNNYNTDGHNGLSSESAEGSSRPVRRATRRTSQLSNNTYDLEMTDSSSQSDDTSGGGGSSNGGGSTTNTGHPSGCSLGGQGPSGRGRVQQASSGACPSTIAPNSTSSNSSNANGNASRRRKGALNAKERNMRRLESNERERMRMHSLNDAFQSLREVIPHVEMERRLSKIETLTLAKNYIINLTHIILSKRNEEAAALELNSGAVGGVLLSNLSSESGGPVASGIPANSNAATICFEDTLASGGAFDCAILAATDGSLLNAATVTTSPAMQSIQSQAIHLQTPMEQQQQQASHLPHHQQAMHGHGHLGASIQSQQQPSLVLNGTTSVGLGIGIGVGVGVGVGVCNNAPSFADINDNFDEPFREFL.

The disordered stretch occupies residues 24-163 (HNNNNYNTDG…RNMRRLESNE (140 aa)). Composition is skewed to polar residues over residues 29-44 (YNTD…SAEG) and 55-64 (RTSQLSNNTY). Residue asparagine 61 is glycosylated (N-linked (GlcNAc...) asparagine). Residues 69 to 78 (TDSSSQSDDT) are compositionally biased toward low complexity. Positions 79-90 (SGGGGSSNGGGS) are enriched in gly residues. Residues 122 to 141 (PSTIAPNSTSSNSSNANGNA) show a composition bias toward low complexity. Asparagine 128, asparagine 133, and asparagine 140 each carry an N-linked (GlcNAc...) asparagine glycan. A compositionally biased stretch (basic and acidic residues) spans 151–163 (AKERNMRRLESNE). The bHLH domain occupies 156–208 (MRRLESNERERMRMHSLNDAFQSLREVIPHVEMERRLSKIETLTLAKNYIINL). Asparagine 207 and asparagine 237 each carry an N-linked (GlcNAc...) asparagine glycan. The interval 312–339 (QQQQASHLPHHQQAMHGHGHLGASIQSQ) is disordered. Residue asparagine 347 is glycosylated (N-linked (GlcNAc...) asparagine).

As to quaternary structure, forms homodimers via the bHLH domain. These dimers bind the core E-box sequence. Detected in the developing nervous system in the bilateral domains in the cephalic region that later on forms part of the ring gland. Concomitantly expressed in the larval central nervous system (CNS), including the dorsal chain neurons as well as several bilateral clusters of neurons: large, midline protocerebral brain cells (MC), lateral protocerebral brain cells (LC), ventral subesophageal neurons (SE) and lateral abdominal neurons, and the transverse nerves. Outside the CNS, detected in at least three classes of endocrine cells: intrinsic cells of the corpora cardiaca, midgut cells, the Inka cells, lateral Bipolar neurons associated with the segmental transverse nerve, and several peptidergic cells of the enteric nervous system. Expressed only in central and peripheral neuroendocrine secretory cells and neurosecretory neurons but not in sensory or motor neurons.

Its subcellular location is the cytoplasm. Transcription factor that regulates neurosecretory (NS) cell function and neuroendocrine cell fate. Acts as a master regulator of common NS functions such as Phm expression and neuropeptide production. Plays a role as a regulator of peptide-containing large dense-core vesicle (LDCV) production and peptidergic cell differentiation. Controls transcription of FMRFamide in Tv neuronal cells and Fur1 in Ap-let cells (Tvb and dorsal apterous cells). Also required for up-regulation of Phm in Tv and Ap-let cells, and expression of three neuropeptide genes, Ms, FMRFamide and Lk. Influences both regulated and constitutive secretory activity in neuroendocrine cells at embryonic and postembryonic level. Loss of function studies show reduced cellular levels of various neuropeptides and neuropeptide biosynthetic enzymes. The protein is Protein dimmed (dimm) of Drosophila melanogaster (Fruit fly).